The primary structure comprises 607 residues: Threonine--tRNA ligase (607 aa).

The editing domain stretch occupies residues 1–143 (MRVLYIHAER…SFKPEEARVA (143 aa)). Catalytic stretches follow at residues 193–489 (PRYL…PRLP) and 194–489 (RYLD…PRLP). Residues Cys286, His337, and His458 each contribute to the Zn(2+) site.

It belongs to the class-II aminoacyl-tRNA synthetase family. As to quaternary structure, homodimer. It depends on Zn(2+) as a cofactor.

It is found in the cytoplasm. It catalyses the reaction tRNA(Thr) + L-threonine + ATP = L-threonyl-tRNA(Thr) + AMP + diphosphate + H(+). Functionally, catalyzes the attachment of threonine to tRNA(Thr) in a two-step reaction: L-threonine is first activated by ATP to form Thr-AMP and then transferred to the acceptor end of tRNA(Thr). Also edits incorrectly charged L-seryl-tRNA(Thr). This Pyrobaculum calidifontis (strain DSM 21063 / JCM 11548 / VA1) protein is Threonine--tRNA ligase.